The following is a 129-amino-acid chain: Iron-sulfur cluster assembly 1 homolog, mitochondrial (129 aa).

Residues 1-12 constitute a mitochondrion transit peptide; that stretch reads MSASLVRATVRA. The Fe cation site is built by cysteine 57, cysteine 121, and cysteine 123.

Belongs to the HesB/IscA family. As to quaternary structure, interacts with CRY2, but not with CRY1 (in vitro).

Its subcellular location is the mitochondrion. In terms of biological role, involved in the maturation of mitochondrial 4Fe-4S proteins functioning late in the iron-sulfur cluster assembly pathway. Probably involved in the binding of an intermediate of Fe/S cluster assembly. This chain is Iron-sulfur cluster assembly 1 homolog, mitochondrial (ISCA1), found in Bos taurus (Bovine).